The sequence spans 267 residues: uncharacterized protein (267 aa).

Positions 17–248 constitute an ABC transporter domain; the sequence is LKVENLTKIF…PRDRTSIEFL (232 aa). 53–60 is a binding site for ATP; that stretch reads GPSGCGKT.

Belongs to the ABC transporter superfamily.

This is an uncharacterized protein from Methanocaldococcus jannaschii (strain ATCC 43067 / DSM 2661 / JAL-1 / JCM 10045 / NBRC 100440) (Methanococcus jannaschii).